A 209-amino-acid polypeptide reads, in one-letter code: Orotate phosphoribosyltransferase (209 aa).

5-phospho-alpha-D-ribose 1-diphosphate-binding positions include arginine 96, lysine 100, histidine 102, and 122 to 130 (EDLISTGGS). Serine 126 is an orotate binding site.

The protein belongs to the purine/pyrimidine phosphoribosyltransferase family. PyrE subfamily. Homodimer. Mg(2+) serves as cofactor.

It catalyses the reaction orotidine 5'-phosphate + diphosphate = orotate + 5-phospho-alpha-D-ribose 1-diphosphate. It functions in the pathway pyrimidine metabolism; UMP biosynthesis via de novo pathway; UMP from orotate: step 1/2. Its function is as follows. Catalyzes the transfer of a ribosyl phosphate group from 5-phosphoribose 1-diphosphate to orotate, leading to the formation of orotidine monophosphate (OMP). This Listeria innocua serovar 6a (strain ATCC BAA-680 / CLIP 11262) protein is Orotate phosphoribosyltransferase.